Reading from the N-terminus, the 432-residue chain is Trigger factor (432 aa).

One can recognise a PPIase FKBP-type domain in the interval 161-246 (EDRVTLDFTG…LKKVEERELP (86 aa)).

Belongs to the FKBP-type PPIase family. Tig subfamily.

Its subcellular location is the cytoplasm. The catalysed reaction is [protein]-peptidylproline (omega=180) = [protein]-peptidylproline (omega=0). Functionally, involved in protein export. Acts as a chaperone by maintaining the newly synthesized protein in an open conformation. Functions as a peptidyl-prolyl cis-trans isomerase. The chain is Trigger factor from Salmonella arizonae (strain ATCC BAA-731 / CDC346-86 / RSK2980).